A 180-amino-acid polypeptide reads, in one-letter code: Large ribosomal subunit protein uL6 (180 aa).

This sequence belongs to the universal ribosomal protein uL6 family. Part of the 50S ribosomal subunit.

Functionally, this protein binds to the 23S rRNA, and is important in its secondary structure. It is located near the subunit interface in the base of the L7/L12 stalk, and near the tRNA binding site of the peptidyltransferase center. The protein is Large ribosomal subunit protein uL6 of Borrelia duttonii (strain Ly).